The sequence spans 995 residues: ATP-dependent RNA helicase DBP10 (995 aa).

Positions 1 to 120 (MAGVQKRKRD…TQTGDDEDDV (120 aa)) are disordered. Composition is skewed to acidic residues over residues 12-25 (EDQDDNGSEEDDIA) and 37-50 (SESDANDSDSEVEA). Basic and acidic residues predominate over residues 71–81 (VNNKKKAENKD). S101 carries the phosphoserine modification. The Q motif motif lies at 137-165 (GSFPSFGLSKIVLNNIKRKGFRQPTPIQR). A Helicase ATP-binding domain is found at 168–340 (IPLILQSRDI…KAGLVNPVLV (173 aa)). An ATP-binding site is contributed by 181 to 188 (ARTGSGKT). Positions 288–291 (DEAD) match the DEAD box motif. Disordered stretches follow at residues 389-427 (LQNSNNEADSDSDDENDRQKKRRNFKKEKFRKQKMPAAN) and 889-973 (GSRE…EQIR). 2 positions are modified to phosphoserine: S398 and S400. 2 stretches are compositionally biased toward basic residues: residues 407 to 422 (QKKRRNFKKEKFRKQK) and 914 to 924 (VRGKFKHKQMK). The Helicase C-terminal domain occupies 418–568 (FRKQKMPAAN…PMYDSLVDVM (151 aa)). The segment covering 964–973 (SELKSTEQIR) has biased composition (basic and acidic residues).

The protein belongs to the DEAD box helicase family. DDX54/DBP10 subfamily. As to quaternary structure, interacts with RRP1 and associates with pre-ribosomal particles.

The protein resides in the nucleus. It localises to the nucleolus. It carries out the reaction ATP + H2O = ADP + phosphate + H(+). ATP-binding RNA helicase involved in the biogenesis of 60S ribosomal subunits and is required for the normal formation of 25S and 5.8S rRNAs. In Saccharomyces cerevisiae (strain ATCC 204508 / S288c) (Baker's yeast), this protein is ATP-dependent RNA helicase DBP10 (DBP10).